We begin with the raw amino-acid sequence, 162 residues long: Allophycocyanin subunit beta (162 aa).

Asparagine 72 is modified (N4-methylasparagine). Cysteine 82 contacts (2R,3E)-phycocyanobilin.

This sequence belongs to the phycobiliprotein family. In terms of assembly, heterohexamer of two alpha chains, one alpha-B chain and three beta chains. Contains one covalently linked phycocyanobilin chromophore. The chromophore is added by phycocyanobilin lyase CpcS 1.

It is found in the cellular thylakoid membrane. Functionally, light-harvesting photosynthetic bile pigment-protein from the phycobiliprotein complex. Allophycocyanin has a maximum absorption at approximately 650 to 653 nanometers. This Nostoc sp. (strain PCC 7120 / SAG 25.82 / UTEX 2576) protein is Allophycocyanin subunit beta (apcB).